Here is a 390-residue protein sequence, read N- to C-terminus: Imidazolonepropionase (390 aa).

2 residues coordinate Fe(3+): His71 and His73. Residues His71 and His73 each contribute to the Zn(2+) site. Residues Arg80, Tyr138, and His165 each contribute to the 4-imidazolone-5-propanoate site. Residue Tyr138 participates in N-formimidoyl-L-glutamate binding. His228 lines the Fe(3+) pocket. Zn(2+) is bound at residue His228. Residue Gln231 participates in 4-imidazolone-5-propanoate binding. A Fe(3+)-binding site is contributed by Asp302. Asp302 contributes to the Zn(2+) binding site. Asn304 and Gly306 together coordinate N-formimidoyl-L-glutamate. Residue Ser307 participates in 4-imidazolone-5-propanoate binding.

It belongs to the metallo-dependent hydrolases superfamily. HutI family. Requires Zn(2+) as cofactor. Fe(3+) is required as a cofactor.

It is found in the cytoplasm. The enzyme catalyses 4-imidazolone-5-propanoate + H2O = N-formimidoyl-L-glutamate. It participates in amino-acid degradation; L-histidine degradation into L-glutamate; N-formimidoyl-L-glutamate from L-histidine: step 3/3. Its function is as follows. Catalyzes the hydrolytic cleavage of the carbon-nitrogen bond in imidazolone-5-propanoate to yield N-formimidoyl-L-glutamate. It is the third step in the universal histidine degradation pathway. The chain is Imidazolonepropionase from Streptomyces griseus subsp. griseus (strain JCM 4626 / CBS 651.72 / NBRC 13350 / KCC S-0626 / ISP 5235).